The chain runs to 320 residues: Protoheme IX farnesyltransferase (320 aa).

A run of 9 helical transmembrane segments spans residues Val-38–Pro-58, Ile-60–Phe-80, Glu-109–Ala-129, Leu-132–Leu-152, Asn-159–Thr-179, Trp-184–Leu-204, Ala-222–Ala-242, Gly-254–Tyr-276, and Tyr-299–Gly-319.

The protein belongs to the UbiA prenyltransferase family. Protoheme IX farnesyltransferase subfamily.

Its subcellular location is the cell membrane. The catalysed reaction is heme b + (2E,6E)-farnesyl diphosphate + H2O = Fe(II)-heme o + diphosphate. The protein operates within porphyrin-containing compound metabolism; heme O biosynthesis; heme O from protoheme: step 1/1. Functionally, converts heme B (protoheme IX) to heme O by substitution of the vinyl group on carbon 2 of heme B porphyrin ring with a hydroxyethyl farnesyl side group. The protein is Protoheme IX farnesyltransferase of Paenarthrobacter aurescens (strain TC1).